The following is a 230-amino-acid chain: 6-carboxyhexanoate--CoA ligase (230 aa).

Belongs to the BioW family. In terms of assembly, homodimer. Mg(2+) serves as cofactor.

It catalyses the reaction heptanedioate + ATP + CoA = 6-carboxyhexanoyl-CoA + AMP + diphosphate. It participates in metabolic intermediate metabolism; pimeloyl-CoA biosynthesis; pimeloyl-CoA from pimelate: step 1/1. Its function is as follows. Catalyzes the transformation of pimelate into pimeloyl-CoA with concomitant hydrolysis of ATP to AMP. The chain is 6-carboxyhexanoate--CoA ligase from Staphylococcus aureus (strain Mu3 / ATCC 700698).